The chain runs to 326 residues: RNA-binding motif protein, X-linked 2 (326 aa).

Residue K8 forms a Glycyl lysine isopeptide (Lys-Gly) (interchain with G-Cter in SUMO2) linkage. Positions 36–114 (AWIFVGGLPY…RTIRVDHVSN (79 aa)) constitute an RRM domain. A disordered region spans residues 117–326 (APQESEDVDD…SYHGSDRRHH (210 aa)). Residue T140 is modified to Phosphothreonine. S149 carries the post-translational modification Phosphoserine. Residues 157 to 172 (TKKHKKDKKEKKKRKK) show a composition bias toward basic residues. Residues 177–190 (GQAQAEQPSCSRSA) are compositionally biased toward polar residues. Basic and acidic residues-rich tracts occupy residues 191-200 (TVKEKKDERA), 207-219 (KTSE…EHRE), 236-245 (ARAEDPECKA), and 255-273 (KSAS…ERGR). Residue S274 is modified to Phosphoserine. A compositionally biased stretch (basic residues) spans 291–312 (HRSRSRSRSPDKSHRHKKYRHS). The span at 313-326 (RERDSYHGSDRRHH) shows a compositional bias: basic and acidic residues.

This sequence belongs to the IST3 family. Part of the activated spliceosome B/catalytic step 1 spliceosome, one of the forms of the spliceosome which has a well-formed active site but still cannot catalyze the branching reaction and is composed of at least 52 proteins, the U2, U5 and U6 snRNAs and the pre-mRNA. Component of the minor spliceosome, which splices U12-type introns.

The protein resides in the nucleus. Involved in pre-mRNA splicing as component of the activated spliceosome. As a component of the minor spliceosome, involved in the splicing of U12-type introns in pre-mRNAs. This chain is RNA-binding motif protein, X-linked 2 (Rbmx2), found in Mus musculus (Mouse).